The chain runs to 219 residues: Histidinol-phosphate aminotransferase (219 aa).

It belongs to the class-II pyridoxal-phosphate-dependent aminotransferase family. Histidinol-phosphate aminotransferase subfamily. As to quaternary structure, homodimer. The cofactor is pyridoxal 5'-phosphate.

The catalysed reaction is L-histidinol phosphate + 2-oxoglutarate = 3-(imidazol-4-yl)-2-oxopropyl phosphate + L-glutamate. The protein operates within amino-acid biosynthesis; L-histidine biosynthesis; L-histidine from 5-phospho-alpha-D-ribose 1-diphosphate: step 7/9. This Mycolicibacterium smegmatis (Mycobacterium smegmatis) protein is Histidinol-phosphate aminotransferase (hisC).